The chain runs to 192 residues: uncharacterized protein (192 aa).

Residues 29–160 (HRQAAVLIPI…PLDIYRRGDS (132 aa)) form the Nudix hydrolase domain. The short motif at 67–89 (GAVDDTDASVIAAALREAEEEVA) is the Nudix box element. E83 and E87 together coordinate Mg(2+).

The protein belongs to the Nudix hydrolase family. PCD1 subfamily. It depends on Mn(2+) as a cofactor. Mg(2+) serves as cofactor.

Its function is as follows. Probably mediates the hydrolysis of some nucleoside diphosphate derivatives. This is an uncharacterized protein from Shigella flexneri.